The sequence spans 196 residues: Secreted phosphoprotein 24 (196 aa).

Residues 1-19 (MKWCGVLMVALLQSLCCSG) form the signal peptide. Cystine bridges form between cysteine 83-cysteine 94 and cysteine 107-cysteine 125. Positions 125–196 (CGQDSSSSES…RGDSFGNHLE (72 aa)) are disordered. The span at 129–138 (SSSSESSSEE) shows a compositional bias: low complexity.

The protein belongs to the SPP2 family. Post-translationally, multiply phosphorylated at serine residues.

Its subcellular location is the secreted. Functionally, could coordinate an aspect of bone turnover. This chain is Secreted phosphoprotein 24 (spp2), found in Salmo salar (Atlantic salmon).